Reading from the N-terminus, the 303-residue chain is MSFTVAVKEEILGQHHLSWHELSAIIKMSGNIGLSTSGLTLSVVTENAKLARHLYESFLHFYEIKSEIRHHQRSNLRKNRVYTVFTDEKVQDLLSDLHLADSFFGLETGIDEAILSDEEAGRAYLCGAFLANGSIRDPESGKYQLEISSVYLDHAQGIASLLQQFLLDAKVLERKKGAVTYLQRAEDIMDFLIVIGAMQARDDFERVKILRETRNDLNRANNAETANIARTVSASMKTINNISKIKDIMGLENLPVDLQEVAQLRIQHPDYSIQQLADSLSTPLTKSGVNHRLRKINKIADEL.

The H-T-H motif DNA-binding region spans 272–303 (SIQQLADSLSTPLTKSGVNHRLRKINKIADEL).

It belongs to the WhiA family.

Involved in cell division and chromosome segregation. The chain is Probable cell division protein WhiA from Streptococcus pneumoniae (strain Hungary19A-6).